The primary structure comprises 599 residues: Adenine deaminase (599 aa).

This sequence belongs to the metallo-dependent hydrolases superfamily. Adenine deaminase family. It depends on Mn(2+) as a cofactor.

It catalyses the reaction adenine + H2O + H(+) = hypoxanthine + NH4(+). In Clostridium botulinum (strain ATCC 19397 / Type A), this protein is Adenine deaminase.